A 227-amino-acid polypeptide reads, in one-letter code: Mediator of RNA polymerase II transcription subunit 18 (227 aa).

This sequence belongs to the Mediator complex subunit 18 family. As to quaternary structure, component of the Mediator complex.

It is found in the nucleus. In terms of biological role, component of the Mediator complex, a coactivator involved in the regulated transcription of nearly all RNA polymerase II-dependent genes. Mediator functions as a bridge to convey information from gene-specific regulatory proteins to the basal RNA polymerase II transcription machinery. Mediator is recruited to promoters by direct interactions with regulatory proteins and serves as a scaffold for the assembly of a functional preinitiation complex with RNA polymerase II and the general transcription factors. The sequence is that of Mediator of RNA polymerase II transcription subunit 18 (mdt-18) from Caenorhabditis briggsae.